The chain runs to 1407 residues: JmjC domain-containing histone demethylation protein 1 (1407 aa).

Disordered stretches follow at residues 1 to 86 (MISA…SSTI) and 98 to 151 (PTFT…NAFS). Composition is skewed to basic and acidic residues over residues 55–67 (DHVR…KRPS) and 125–140 (PVER…RDES). The segment covering 141–150 (SYTQHRSNAF) has biased composition (polar residues). The PHD-type zinc-finger motif lies at 323 to 382 (QASCATCNLVRIPVDNEDQDVTWISCDGCKRWFHIVCAGFKNDRETRTVDKFICKTCRPI). The JmjC domain maps to 577 to 735 (VSQSKLGRLI…MQIKIAKIEK (159 aa)). Threonine 628 contacts substrate. Fe cation contacts are provided by histidine 631 and aspartate 633. Residue lysine 648 participates in substrate binding. A Fe cation-binding site is contributed by histidine 703. Disordered regions lie at residues 893 to 987 (KLSL…LGPK), 1004 to 1027 (KEEN…HHTP), 1122 to 1183 (IKAQ…QDSV), and 1252 to 1389 (DEMD…SLRL). Basic and acidic residues-rich tracts occupy residues 896–914 (LAEK…RNAD) and 928–938 (LSERPAVDIQK). Residues 1008 to 1027 (NGASGSQMTVSTSSLGHHTP) show a composition bias toward polar residues. A compositionally biased stretch (basic and acidic residues) spans 1254–1264 (MDIHDQVDAGG). Over residues 1273 to 1284 (PSSGSRQSSRQP) the composition is skewed to low complexity. Residues 1285 to 1296 (RQVERYMPEVHF) show a composition bias toward basic and acidic residues. Low complexity predominate over residues 1297 to 1349 (AKTAKSTTTTPQTTRRSSFGSSGRKTTPGLSSGSKKSGSRPSSSHGKKSLSPS).

Belongs to the JHDM1 histone demethylase family. Fe(2+) serves as cofactor.

Its subcellular location is the nucleus. It catalyses the reaction N(6),N(6)-dimethyl-L-lysyl(36)-[histone H3] + 2 2-oxoglutarate + 2 O2 = L-lysyl(36)-[histone H3] + 2 formaldehyde + 2 succinate + 2 CO2. Its function is as follows. Histone demethylase that specifically demethylates 'Lys-36' of histone H3, thereby playing a central role in histone code. The chain is JmjC domain-containing histone demethylation protein 1 (jhd1) from Emericella nidulans (strain FGSC A4 / ATCC 38163 / CBS 112.46 / NRRL 194 / M139) (Aspergillus nidulans).